A 179-amino-acid chain; its full sequence is MFHGTTILSVRRQTPQGVQVAIGGDGQVTLGAIVVKGTARKVRKLHHGKVLAGFAGATADAFTLFERFEAKLDKHQGHLVRSAIELTKDWRTDRVLRRLEAMLAVADQESSLIITGNGDVLEPEQGIIAIGSGGAYANAAAKALLNHTDLSAADIVKQALEIAGELCIYTNMHHTIETL.

T5 is an active-site residue. 3 residues coordinate Na(+): G164, C167, and T170.

It belongs to the peptidase T1B family. HslV subfamily. In terms of assembly, a double ring-shaped homohexamer of HslV is capped on each side by a ring-shaped HslU homohexamer. The assembly of the HslU/HslV complex is dependent on binding of ATP.

Its subcellular location is the cytoplasm. It catalyses the reaction ATP-dependent cleavage of peptide bonds with broad specificity.. With respect to regulation, allosterically activated by HslU binding. Protease subunit of a proteasome-like degradation complex believed to be a general protein degrading machinery. The sequence is that of ATP-dependent protease subunit HslV from Verminephrobacter eiseniae (strain EF01-2).